The chain runs to 942 residues: Leucine--tRNA ligase (942 aa).

Positions 41 to 51 (PYLNGVLHAGH) match the 'HIGH' region motif. The short motif at 633 to 637 (KLSKS) is the 'KMSKS' region element. Lysine 636 contributes to the ATP binding site.

The protein belongs to the class-I aminoacyl-tRNA synthetase family.

Its subcellular location is the cytoplasm. It carries out the reaction tRNA(Leu) + L-leucine + ATP = L-leucyl-tRNA(Leu) + AMP + diphosphate. This chain is Leucine--tRNA ligase, found in Methanocaldococcus jannaschii (strain ATCC 43067 / DSM 2661 / JAL-1 / JCM 10045 / NBRC 100440) (Methanococcus jannaschii).